Here is a 136-residue protein sequence, read N- to C-terminus: Large ribosomal subunit protein uL3 (136 aa).

Glutamine 83 bears the N5-methylglutamine mark.

It belongs to the universal ribosomal protein uL3 family. Part of the 50S ribosomal subunit. Forms a cluster with proteins L14 and L19. Methylated by PrmB.

In terms of biological role, one of the primary rRNA binding proteins, it binds directly near the 3'-end of the 23S rRNA, where it nucleates assembly of the 50S subunit. The polypeptide is Large ribosomal subunit protein uL3 (rplC) (Carsonella ruddii).